Here is a 290-residue protein sequence, read N- to C-terminus: Fructokinase (290 aa).

T130 contacts ATP. H153, C169, H172, and C175 together coordinate Zn(2+). ATP-binding positions include P183 and 231-235 (GVMEK).

This sequence belongs to the ROK (NagC/XylR) family. In terms of assembly, homodimer. Mg(2+) is required as a cofactor.

The catalysed reaction is D-fructose + ATP = D-fructose 6-phosphate + ADP + H(+). Inactivated by EDTA. Inhibition by zinc ions (Potential). The chain is Fructokinase (scrK) from Lactococcus lactis subsp. cremoris (Streptococcus cremoris).